We begin with the raw amino-acid sequence, 250 residues long: tRNA pseudouridine synthase A (250 aa).

Aspartate 52 functions as the Nucleophile in the catalytic mechanism. Tyrosine 110 is a binding site for substrate.

The protein belongs to the tRNA pseudouridine synthase TruA family. Homodimer.

The enzyme catalyses uridine(38/39/40) in tRNA = pseudouridine(38/39/40) in tRNA. In terms of biological role, formation of pseudouridine at positions 38, 39 and 40 in the anticodon stem and loop of transfer RNAs. The sequence is that of tRNA pseudouridine synthase A from Citrifermentans bemidjiense (strain ATCC BAA-1014 / DSM 16622 / JCM 12645 / Bem) (Geobacter bemidjiensis).